A 185-amino-acid chain; its full sequence is Ribosome-recycling factor (185 aa).

It belongs to the RRF family.

It localises to the cytoplasm. Responsible for the release of ribosomes from messenger RNA at the termination of protein biosynthesis. May increase the efficiency of translation by recycling ribosomes from one round of translation to another. This Arthrobacter sp. (strain FB24) protein is Ribosome-recycling factor.